The chain runs to 163 residues: MSSQIQSVHTPSVSLSKYRDQHFKGSRHEQEKLLRVSSTLYVGNLSFYTTEEQIHELFSRCGDVRRIIMGLDKFKKTPCGFCFVEYYSRLDAESAMRYINGTRLDDRIVRVDWDAGFIEGRQYGRGKTGGQVRDEYRQDHDLGRGGYGKMVQMGQLGAPSMRE.

Residues Tyr-18, Tyr-41, 110–114 (RVDWD), 121–125 (RQYGR), and 131–132 (QV) contribute to the mRNA site. The region spanning 38-116 (STLYVGNLSF…RIVRVDWDAG (79 aa)) is the RRM domain.

This sequence belongs to the RRM NCBP2 family. Component of the nuclear cap-binding complex (CBC), a heterodimer composed of Cbp80 and Cbp20 that interacts with m7GpppG-capped RNA.

The protein resides in the nucleus. Component of the cap-binding complex (CBC), which binds co-transcriptionally to the 5' cap of pre-mRNAs and is involved in various processes such as pre-mRNA splicing and RNA-mediated gene silencing (RNAi). The CBC complex is involved in miRNA-mediated RNA interference and is required for primary microRNAs (miRNAs) processing. Also involved in innate immunity via the short interfering RNAs (siRNAs) processing machinery by restricting the viral RNA production. In the CBC complex, Cbp20 recognizes and binds capped RNAs (m7GpppG-capped RNA) but requires Cbp80 to stabilize the movement of its N-terminal loop and lock the CBC into a high affinity cap-binding state with the cap structure. This chain is Nuclear cap-binding protein subunit 2 (Cbp20), found in Anopheles gambiae (African malaria mosquito).